Reading from the N-terminus, the 221-residue chain is U1 small nuclear ribonucleoprotein C (221 aa).

Residues 4–36 (YFCDYCDTYLTHDSPSVRKTHCNGRKHKENVRV) form a Matrin-type zinc finger. Residues 100-168 (SNPFPTSQAG…PPGAPTLPQP (69 aa)) form a disordered region. Residues 134–166 (APAPPRMPGPLLMTPPPGAAAPGMAPPGAPTLP) are compositionally biased toward pro residues.

This sequence belongs to the U1 small nuclear ribonucleoprotein C family. As to quaternary structure, U1 snRNP is composed of the 7 core Sm proteins B/B', D1, D2, D3, E, F and G that assemble in a heptameric protein ring on the Sm site of the small nuclear RNA to form the core snRNP, and at least 3 U1 snRNP-specific proteins U1-70K, U1-A and U1-C. U1-C interacts with U1 snRNA and the 5' splice-site region of the pre-mRNA.

The protein localises to the nucleus. Component of the spliceosomal U1 snRNP, which is essential for recognition of the pre-mRNA 5' splice-site and the subsequent assembly of the spliceosome. U1-C is directly involved in initial 5' splice-site recognition for both constitutive and regulated alternative splicing. The interaction with the 5' splice-site seems to precede base-pairing between the pre-mRNA and the U1 snRNA. Stimulates commitment or early (E) complex formation by stabilizing the base pairing of the 5' end of the U1 snRNA and the 5' splice-site region. This Branchiostoma floridae (Florida lancelet) protein is U1 small nuclear ribonucleoprotein C.